A 1104-amino-acid polypeptide reads, in one-letter code: Transposon Ty4-P Gag-Pol polyprotein (1104 aa).

Positions 48–112 form a coiled coil; it reads VKQYQRNLNR…VEKIQLLETN (65 aa). The interval 381-501 is ty4 protease; the sequence is QQQLKSSAKE…KTKMVLSRKY (121 aa). D414 functions as the For protease activity; shared with dimeric partner in the catalytic mechanism. An integrase-type zinc finger-like region spans residues 539–599; it reads AIKPTSSPGF…EPNEFWCQTC (61 aa). The Integrase catalytic domain occupies 619-786; the sequence is TDHEPGSSWC…LPLKAISRQP (168 aa). The Mg(2+) site is built by D630 and D695.

As to quaternary structure, the protease is a homodimer, whose active site consists of two apposed aspartic acid residues. Proteolytically processed into capsid protein (CA), Ty4 protease (PR), integrase (IN) and reverse transcriptase/ribonuclease H (RT) proteins. Initially, virus-like particles (VLPs) are composed of the structural unprocessed proteins Gag and Gag-Pol, and also contain the host initiator methionine tRNA (tRNA(i)-Met) which serves as a primer for minus-strand DNA synthesis, and a dimer of genomic Ty RNA. Processing of the polyproteins occurs within the particle and proceeds by an ordered pathway, called maturation. First, the protease (PR) is released by autocatalytic cleavage of the Gag-Pol polyprotein, and this cleavage is a prerequisite for subsequent processing at the remaining sites to release the mature structural and catalytic proteins. Maturation takes place prior to the RT reaction and is required to produce transposition-competent VLPs.

It is found in the cytoplasm. The protein resides in the nucleus. The catalysed reaction is DNA(n) + a 2'-deoxyribonucleoside 5'-triphosphate = DNA(n+1) + diphosphate. It carries out the reaction Endonucleolytic cleavage to 5'-phosphomonoester.. In terms of biological role, capsid protein (CA) is the structural component of the virus-like particle (VLP), forming the shell that encapsulates the retrotransposons dimeric RNA genome. Its function is as follows. The aspartyl protease (PR) mediates the proteolytic cleavages of the Gag and Gag-Pol polyproteins after assembly of the VLP. Functionally, reverse transcriptase/ribonuclease H (RT) is a multifunctional enzyme that catalyzes the conversion of the retro-elements RNA genome into dsDNA within the VLP. The enzyme displays a DNA polymerase activity that can copy either DNA or RNA templates, and a ribonuclease H (RNase H) activity that cleaves the RNA strand of RNA-DNA heteroduplexes during plus-strand synthesis and hydrolyzes RNA primers. The conversion leads to a linear dsDNA copy of the retrotransposon that includes long terminal repeats (LTRs) at both ends. Integrase (IN) targets the VLP to the nucleus, where a subparticle preintegration complex (PIC) containing at least integrase and the newly synthesized dsDNA copy of the retrotransposon must transit the nuclear membrane. Once in the nucleus, integrase performs the integration of the dsDNA into the host genome. The chain is Transposon Ty4-P Gag-Pol polyprotein (TY4B-P) from Saccharomyces cerevisiae (strain ATCC 204508 / S288c) (Baker's yeast).